A 295-amino-acid chain; its full sequence is ER-localized J domain-containing protein 5 (295 aa).

The N-terminal stretch at 1–20 (MNGYWKPALVVLGLVSLSYA) is a signal peptide. The Lumenal portion of the chain corresponds to 21–130 (FTTIETEIFQ…GFYFSRMKPK (110 aa)). Residues 42-110 (DMNFYKFLKL…RKIYDYYLQN (69 aa)) form the J domain. A helical transmembrane segment spans residues 131–151 (TWFLLAFIWIVVNIGQYIISI). Residues 152–295 (IQYRSQRSRI…PNGKVIYSRK (144 aa)) are Cytoplasmic-facing. A disordered region spans residues 259–287 (KYDGNQTKKGNKVKKGSAKKGQKKMELPN). Residues 267-280 (KGNKVKKGSAKKGQ) show a composition bias toward basic residues.

It belongs to the DnaJ family.

It localises to the endoplasmic reticulum membrane. Its function is as follows. DnaJ-like chaperone required for the folding capacity of the endoplasmic reticulum. The polypeptide is ER-localized J domain-containing protein 5 (ERJ5) (Saccharomyces cerevisiae (strain ATCC 204508 / S288c) (Baker's yeast)).